The chain runs to 420 residues: MPLNANFPSKNYDYDYDLQPCFFFLEEENFYHQQSRLQPPAPSEDIWKKFELLPTPPLSPSRRSSQSSLFPSTADQLEMVTEFLGGDMVNQSFICEADDEALLKSIVIQDCMWSGFSAAAKLEKVVSEKLASYQASRKESALSTSQCQSQPPQSPLKSPSCDGSLNLGGTNRSSHEFLQDPSSDCVDPSVVFPYPLNDSISNASSPCQDLMLETPPISSNSSSSESEDEQEDDDDDEDCDEEEEIDVVTVEKRQTASRRMESGSHSQSSRPHHSPLVLKRCHVPIHQHNYAASPSTKVDYVSSKRAKLESNVRVLKQISNNRKCASPRSSDSEENDKRRTHNVLERQRRNELKLSFFALRDQVPRWRNNEKAPKVVILKKATEYAISMQEDERRLIRETEQLKYRKEQLKQRLQQLRNSV.

Positions 78-86 (EMVTEFLGG) match the 9aaTAD motif. 3 disordered regions span residues 141-181 (ALST…LQDP), 203-275 (ASSP…HHSP), and 319-345 (SNNR…NVLE). Residues 143–160 (STSQCQSQPPQSPLKSPS) show a composition bias toward low complexity. Residues 161-172 (CDGSLNLGGTNR) are compositionally biased toward polar residues. Over residues 225 to 246 (ESEDEQEDDDDDEDCDEEEEID) the composition is skewed to acidic residues. Basic and acidic residues predominate over residues 249–262 (TVEKRQTASRRMES). A compositionally biased stretch (polar residues) spans 319–329 (SNNRKCASPRS). The 53-residue stretch at 336–388 (DKRRTHNVLERQRRNELKLSFFALRDQVPRWRNNEKAPKVVILKKATEYAISM) folds into the bHLH domain. Positions 395 to 416 (LIRETEQLKYRKEQLKQRLQQL) are leucine-zipper.

As to quaternary structure, efficient DNA binding requires dimerization with another bHLH protein. Binds DNA as a heterodimer with MAX.

It localises to the nucleus. Transcription factor that binds DNA in a non-specific manner, yet also specifically recognizes the core sequence 5'-CAC[GA]TG-3'. Activates the transcription of growth-related genes. This chain is Transcriptional regulator Myc-B (myc-b), found in Xenopus laevis (African clawed frog).